A 522-amino-acid polypeptide reads, in one-letter code: Putative malate dehydrogenase 1B (522 aa).

A disordered region spans residues 495–522 (EETEKSSSEDTPEAAAAAVSTGDETVPS).

The protein belongs to the LDH/MDH superfamily. MDH type 2 family.

The protein is Putative malate dehydrogenase 1B (MDH1B) of Branchiostoma floridae (Florida lancelet).